A 284-amino-acid polypeptide reads, in one-letter code: Nucleotide-binding protein Sputw3181_3461 (284 aa).

8–15 (GRSGSGKS) serves as a coordination point for ATP. Residue 56-59 (DVRN) participates in GTP binding.

This sequence belongs to the RapZ-like family.

Its function is as follows. Displays ATPase and GTPase activities. The protein is Nucleotide-binding protein Sputw3181_3461 of Shewanella sp. (strain W3-18-1).